We begin with the raw amino-acid sequence, 343 residues long: MTTDTSGRTGNPAAAAPAERFRYGFLKGNPQLTKNGELKHLLTIEGLPRAILNQILDTAEQFVSVTDREVKKVPLLRGKSVFNLFFENSTRTRTTFEIAAKRLSADVINLNINASSTSKGESLLDTINNLSAMHADLFVVRHASSGAPYLIAEHCAPHVHVINAGDGRHAHPTQGLLDMYTIRHYKRDFTKLRVAIVGDILHSRVARSDIHALTTLGVPEVRAIGPRTLLPGGLEQMGVRVFHNLDEGLRDVDVIIMLRLQNERMSGALLPSAQEYFKSWGLTPERLALAAPDAIVMHPGPMNRGVEIDSQVADGPQSVILNQVTFGIAVRMAVMGIVAGTSD.

The carbamoyl phosphate site is built by Arg91 and Thr92. Residue Lys119 participates in L-aspartate binding. Positions 141, 171, and 174 each coordinate carbamoyl phosphate. Arg204 and Arg259 together coordinate L-aspartate. Carbamoyl phosphate contacts are provided by Gly300 and Pro301.

The protein belongs to the aspartate/ornithine carbamoyltransferase superfamily. ATCase family. As to quaternary structure, heterododecamer (2C3:3R2) of six catalytic PyrB chains organized as two trimers (C3), and six regulatory PyrI chains organized as three dimers (R2).

The enzyme catalyses carbamoyl phosphate + L-aspartate = N-carbamoyl-L-aspartate + phosphate + H(+). It functions in the pathway pyrimidine metabolism; UMP biosynthesis via de novo pathway; (S)-dihydroorotate from bicarbonate: step 2/3. In terms of biological role, catalyzes the condensation of carbamoyl phosphate and aspartate to form carbamoyl aspartate and inorganic phosphate, the committed step in the de novo pyrimidine nucleotide biosynthesis pathway. The sequence is that of Aspartate carbamoyltransferase catalytic subunit from Burkholderia mallei (strain NCTC 10247).